The chain runs to 76 residues: Small proline-rich protein 2I (76 aa).

3 tandem repeats follow at residues 21–29, 30–38, and 39–47. Residues 21-47 are 3 X 9 AA approximate tandem repeats; the sequence is KKCPEPCPPPQCPEPCPPPKCPEPCPE. A compositionally biased stretch (pro residues) spans 40 to 53; the sequence is KCPEPCPESCPPPS. The interval 40-76 is disordered; the sequence is KCPEPCPESCPPPSYQQKCPPVQPPPPCQQKCPPKSK.

The protein belongs to the cornifin (SPRR) family. As to expression, not expressed in uterus.

The protein localises to the cytoplasm. In terms of biological role, cross-linked envelope protein of keratinocytes. It is a keratinocyte protein that first appears in the cell cytosol, but ultimately becomes cross-linked to membrane proteins by transglutaminase. All that results in the formation of an insoluble envelope beneath the plasma membrane. In Mus musculus (Mouse), this protein is Small proline-rich protein 2I (Sprr2i).